Consider the following 68-residue polypeptide: Ribosome modulation factor (68 aa).

Belongs to the ribosome modulation factor family.

The protein localises to the cytoplasm. Its function is as follows. During stationary phase, converts 70S ribosomes to an inactive dimeric form (100S ribosomes). The chain is Ribosome modulation factor from Saccharophagus degradans (strain 2-40 / ATCC 43961 / DSM 17024).